The sequence spans 344 residues: MSASQGSKNTNAEPWGGFDDNIIQGTGSAVIDMENMDDTSGSSFEDVGEMHQRMREEEEVTAEAAATEEDNGEYGEFLGMKGLKGQLGRQVADEVWQAGKRQASKAFNLYANIDILRPYFDVEPIQVRNRLVESLIPVRMINFPQKVAGELYGPMMLVFTLVAILLHGMKTSGTVIREGTLMGTAIGTGFGYWLGVSSFIYFLAYLCNAQITMLQMLSLLGYGLFGHCVVLFITYNVHFHSLFYLLWMVIGGLSTLRMVAVLISRTVGQTPRLILCGSLAALHMLFLLYLHFAYHKMVEGILDTLEGPNIPPIQRVARDVPVVASAVVNATVKSIAAIVQSQQL.

Residues 1–12 show a composition bias toward polar residues; it reads MSASQGSKNTNA. Residues 1–24 are disordered; sequence MSASQGSKNTNAEPWGGFDDNIIQ. The Cytoplasmic portion of the chain corresponds to 1–146; it reads MSASQGSKNT…PVRMINFPQK (146 aa). A helical membrane pass occupies residues 147-167; sequence VAGELYGPMMLVFTLVAILLH. Residues 168–185 lie on the Lumenal side of the membrane; the sequence is GMKTSGTVIREGTLMGTA. A helical transmembrane segment spans residues 186-206; sequence IGTGFGYWLGVSSFIYFLAYL. The Cytoplasmic segment spans residues 207–212; sequence CNAQIT. The chain crosses the membrane as a helical span at residues 213–233; that stretch reads MLQMLSLLGYGLFGHCVVLFI. Residues 234–242 are Lumenal-facing; that stretch reads TYNVHFHSL. A helical transmembrane segment spans residues 243–263; it reads FYLLWMVIGGLSTLRMVAVLI. Residues 264-272 lie on the Cytoplasmic side of the membrane; sequence SRTVGQTPR. Residues 273 to 293 form a helical membrane-spanning segment; that stretch reads LILCGSLAALHMLFLLYLHFA. Topologically, residues 294–344 are lumenal; sequence YHKMVEGILDTLEGPNIPPIQRVARDVPVVASAVVNATVKSIAAIVQSQQL. The N-linked (GlcNAc...) asparagine glycan is linked to Asn329.

Belongs to the YIP1 family.

It is found in the cell membrane. It localises to the golgi apparatus. The protein resides in the cis-Golgi network membrane. The protein localises to the cytoplasm. Functionally, involved in the maintenance of the Golgi structure. May play a role in hematopoiesis. In Danio rerio (Zebrafish), this protein is Protein YIPF3 (yipf3).